Reading from the N-terminus, the 145-residue chain is Large ribosomal subunit protein bL17 (145 aa).

Belongs to the bacterial ribosomal protein bL17 family. Part of the 50S ribosomal subunit. Contacts protein L32.

This Francisella tularensis subsp. tularensis (strain FSC 198) protein is Large ribosomal subunit protein bL17.